A 340-amino-acid chain; its full sequence is UDP-3-O-acylglucosamine N-acyltransferase (340 aa).

The active-site Proton acceptor is His240.

It belongs to the transferase hexapeptide repeat family. LpxD subfamily. As to quaternary structure, homotrimer.

The enzyme catalyses a UDP-3-O-[(3R)-3-hydroxyacyl]-alpha-D-glucosamine + a (3R)-hydroxyacyl-[ACP] = a UDP-2-N,3-O-bis[(3R)-3-hydroxyacyl]-alpha-D-glucosamine + holo-[ACP] + H(+). Its pathway is bacterial outer membrane biogenesis; LPS lipid A biosynthesis. Functionally, catalyzes the N-acylation of UDP-3-O-acylglucosamine using 3-hydroxyacyl-ACP as the acyl donor. Is involved in the biosynthesis of lipid A, a phosphorylated glycolipid that anchors the lipopolysaccharide to the outer membrane of the cell. The polypeptide is UDP-3-O-acylglucosamine N-acyltransferase (Pseudoalteromonas translucida (strain TAC 125)).